A 592-amino-acid polypeptide reads, in one-letter code: Arginine--tRNA ligase (592 aa).

Positions 134-144 (ANPTGPLHVGH) match the 'HIGH' region motif.

This sequence belongs to the class-I aminoacyl-tRNA synthetase family. As to quaternary structure, monomer.

The protein resides in the cytoplasm. The enzyme catalyses tRNA(Arg) + L-arginine + ATP = L-arginyl-tRNA(Arg) + AMP + diphosphate. The sequence is that of Arginine--tRNA ligase from Coxiella burnetii (strain CbuG_Q212) (Coxiella burnetii (strain Q212)).